The following is a 513-amino-acid chain: 2-isopropylmalate synthase (513 aa).

The 264-residue stretch at 5-268 (LIIFDTTLRD…EVGIDTTQIV (264 aa)) folds into the Pyruvate carboxyltransferase domain. Mn(2+) is bound by residues aspartate 14, histidine 202, histidine 204, and asparagine 239. The interval 394–513 (RLLSLEQQSA…SKNERVAAQG (120 aa)) is regulatory domain.

The protein belongs to the alpha-IPM synthase/homocitrate synthase family. LeuA type 1 subfamily. As to quaternary structure, homodimer. Mn(2+) serves as cofactor.

The protein localises to the cytoplasm. It carries out the reaction 3-methyl-2-oxobutanoate + acetyl-CoA + H2O = (2S)-2-isopropylmalate + CoA + H(+). It participates in amino-acid biosynthesis; L-leucine biosynthesis; L-leucine from 3-methyl-2-oxobutanoate: step 1/4. Its function is as follows. Catalyzes the condensation of the acetyl group of acetyl-CoA with 3-methyl-2-oxobutanoate (2-ketoisovalerate) to form 3-carboxy-3-hydroxy-4-methylpentanoate (2-isopropylmalate). The chain is 2-isopropylmalate synthase from Methylibium petroleiphilum (strain ATCC BAA-1232 / LMG 22953 / PM1).